A 509-amino-acid chain; its full sequence is Protein WHAT'S THIS FACTOR 1 homolog, chloroplastic (509 aa).

The N-terminal 56 residues, 1-56 (MDAKLLLLPFPSPPATLHHHPPPPKSLFLGASLPLLHPPPPLRLLRPGAPRRLAVV), are a transit peptide targeting the chloroplast. A PORR domain is found at 65-393 (KEIPFDNVIQ…LKEKMRALVA (329 aa)). 2 disordered regions span residues 402–431 (VPATSEEADRTNGAAQMLSEGSDVEDDEDE) and 444–509 (SGGK…RERW). A compositionally biased stretch (acidic residues) spans 461 to 474 (ENDDSPPDFEDDDG).

The protein resides in the plastid. It is found in the chloroplast. In terms of biological role, RNA-binding protein involved in group II intron splicing. Binds specific group II introns and promotes their splicing. Functions in the context of a heterodimer with the ribonuclease III domain-containing protein RNC1. This is Protein WHAT'S THIS FACTOR 1 homolog, chloroplastic from Oryza sativa subsp. japonica (Rice).